The primary structure comprises 72 residues: NADH dehydrogenase [ubiquinone] 1 beta subcomplex subunit 3-A (72 aa).

The chain crosses the membrane as a helical span at residues 31 to 48; that stretch reads ALPGIGIGVGAFCVYLVG.

The protein belongs to the complex I NDUFB3 subunit family. In terms of assembly, complex I is composed of at least 49 different subunits.

Its subcellular location is the mitochondrion inner membrane. Functionally, accessory subunit of the mitochondrial membrane respiratory chain NADH dehydrogenase (Complex I), that is believed not to be involved in catalysis. Complex I functions in the transfer of electrons from NADH to the respiratory chain. The immediate electron acceptor for the enzyme is believed to be ubiquinone. The chain is NADH dehydrogenase [ubiquinone] 1 beta subcomplex subunit 3-A from Arabidopsis thaliana (Mouse-ear cress).